The chain runs to 219 residues: MGRRPARCYRQIKNKPYPKSRYCRGVPDPKIRIYDVGMKKKGVDEFSHCVHLVSWEKENVTSEALEAARIACNKYMTKSAGKDAFHLRVRVHPFHVLRINKMLSCAGADRLQTGMRGAFGKPQGTCARVDIGQVLLSVRCKPNNAVHASEALRRAKFKFPGRQKIIESRKWGFTKFSRDEYVRLKSEGRIMPDGVNAKLLGCHGRLSARAPGKAFLSAA.

This sequence belongs to the universal ribosomal protein uL16 family. In terms of assembly, component of the small ribosomal subunit. Mature ribosomes consist of a small (40S) and a large (60S) subunit. The 40S subunit contains about 33 different proteins and 1 molecule of RNA (18S). The 60S subunit contains about 49 different proteins and 3 molecules of RNA (25S, 5.8S and 5S).

The sequence is that of Large ribosomal subunit protein uL16y (SG12) from Oryza sativa subsp. japonica (Rice).